The following is a 46-amino-acid chain: KTCMTKKEGWGRCLIDTTCAHSCRKYGYMGGKCQGITRRCYCLLNC.

Disulfide bonds link Cys-3/Cys-46, Cys-13/Cys-33, Cys-19/Cys-40, and Cys-23/Cys-42.

As to quaternary structure, monomer. In terms of tissue distribution, present in seeds, cotyledons and leaves. Not found in roots or stems.

In terms of biological role, has antibacterial activity against the Gram-positive bacterium S.aureus and the Gram-negative bacteria E.coli and P.syringae. Does not have antibacterial activity against the phytopathogenic bacteria R.solanacearum, Rhataybacter sp and Erwinia sp. Does not inhibit trypsin, chymotrypsin or alpha-amylases. The sequence is that of Defensin-like protein 2 from Vigna unguiculata (Cowpea).